The primary structure comprises 493 residues: ATP synthase subunit beta, chloroplastic (493 aa).

170–177 (GGAGVGKT) contributes to the ATP binding site.

It belongs to the ATPase alpha/beta chains family. In terms of assembly, F-type ATPases have 2 components, CF(1) - the catalytic core - and CF(0) - the membrane proton channel. CF(1) has five subunits: alpha(3), beta(3), gamma(1), delta(1), epsilon(1). CF(0) has four main subunits: a(1), b(1), b'(1) and c(9-12).

The protein localises to the plastid. It localises to the chloroplast thylakoid membrane. The catalysed reaction is ATP + H2O + 4 H(+)(in) = ADP + phosphate + 5 H(+)(out). In terms of biological role, produces ATP from ADP in the presence of a proton gradient across the membrane. The catalytic sites are hosted primarily by the beta subunits. The chain is ATP synthase subunit beta, chloroplastic from Adiantum capillus-veneris (Maidenhair fern).